The chain runs to 222 residues: MGKLIIVGTPIGNLEDITIRALKTLREVDLILAEDTRRTMVLLNKYRIKKPLLSFNERNSKKRIKEILPLLKEGKKVAIVSDAGMPVISDPGYNLVEECWREGIEVDIVPGPSALTSAVAVSGFPGSKFIFEGFLPRGKNRRRLLKSLKKENRVIVFFESPERLLSTLRDILEIIGDREVFIAREMTKLHQEFFRGKVSEAISHFEKKKPLGEITVVLSGKE.

The protein belongs to the methyltransferase superfamily. RsmI family.

Its subcellular location is the cytoplasm. The catalysed reaction is cytidine(1402) in 16S rRNA + S-adenosyl-L-methionine = 2'-O-methylcytidine(1402) in 16S rRNA + S-adenosyl-L-homocysteine + H(+). Catalyzes the 2'-O-methylation of the ribose of cytidine 1402 (C1402) in 16S rRNA. In Thermotoga maritima (strain ATCC 43589 / DSM 3109 / JCM 10099 / NBRC 100826 / MSB8), this protein is Ribosomal RNA small subunit methyltransferase I.